The primary structure comprises 148 residues: Ribonuclease H (148 aa).

Positions 1-143 (MNQVVIYTDG…ADMLANKGVE (143 aa)) constitute an RNase H type-1 domain. 4 residues coordinate Mg(2+): aspartate 9, glutamate 47, aspartate 69, and aspartate 135.

It belongs to the RNase H family. Monomer. Requires Mg(2+) as cofactor.

The protein localises to the cytoplasm. It catalyses the reaction Endonucleolytic cleavage to 5'-phosphomonoester.. Endonuclease that specifically degrades the RNA of RNA-DNA hybrids. This Acidovorax sp. (strain JS42) protein is Ribonuclease H.